The chain runs to 398 residues: O-methyltransferase mpaG' (398 aa).

Position 144 (Ser144) interacts with (4E,8E)-10-(4,6-dihydroxy-7-methyl-3-oxo-1,3-dihydro-2-benzofuran-5-yl)-4,8-dimethyldeca-4,8-dienoate. Ser144 contributes to the 4-farnesyl-3,5-dihydroxy-6-methylphthalide binding site. Ser144 is a binding site for 6-O-desmethylmycophenolate. S-adenosyl-L-homocysteine is bound at residue Asn197. Tyr199 serves as a coordination point for (4E,8E)-10-(4,6-dihydroxy-7-methyl-3-oxo-1,3-dihydro-2-benzofuran-5-yl)-4,8-dimethyldeca-4,8-dienoate. Residue Tyr199 coordinates 4-farnesyl-3,5-dihydroxy-6-methylphthalide. A 6-O-desmethylmycophenolate-binding site is contributed by Tyr199. S-adenosyl-L-homocysteine contacts are provided by Tyr203, Asp237, Gly239, His244, Asp245, Asp264, and Arg265. Position 264 (Asp264) interacts with S-adenosyl-L-methionine. (4E,8E)-10-(4,6-dihydroxy-7-methyl-3-oxo-1,3-dihydro-2-benzofuran-5-yl)-4,8-dimethyldeca-4,8-dienoate is bound by residues Arg265 and Gln267. Arg265 provides a ligand contact to 6-O-desmethylmycophenolate. Residues Asp286, Ile287, and His302 each coordinate S-adenosyl-L-homocysteine. Ser303 lines the (4E,8E)-10-(4,6-dihydroxy-7-methyl-3-oxo-1,3-dihydro-2-benzofuran-5-yl)-4,8-dimethyldeca-4,8-dienoate pocket. Residue Ser303 participates in 4-farnesyl-3,5-dihydroxy-6-methylphthalide binding. Ser303 provides a ligand contact to 6-O-desmethylmycophenolate. Catalysis depends on His306, which acts as the Proton acceptor. Residues Glu335 and Glu362 contribute to the active site.

It belongs to the class I-like SAM-binding methyltransferase superfamily. Cation-independent O-methyltransferase family. As to quaternary structure, homodimer.

Its subcellular location is the cytoplasm. The protein localises to the cytosol. It catalyses the reaction (4E,8E)-10-(4,6-dihydroxy-7-methyl-3-oxo-1,3-dihydro-2-benzofuran-5-yl)-4,8-dimethyldeca-4,8-dienoate + S-adenosyl-L-methionine = (4E,8E)-10-(4-hydroxy-6-methoxy-7-methyl-3-oxo-1,3-dihydro-2-benzofuran-5-yl)-4,8-dimethyldeca-4,8-dienoate + S-adenosyl-L-homocysteine + H(+). The enzyme catalyses 4-farnesyl-3,5-dihydroxy-6-methylphthalide + S-adenosyl-L-methionine = 4-farnesyl-3,5-dihydroxy-6-methoxylphthalide + S-adenosyl-L-homocysteine + H(+). The catalysed reaction is 6-O-desmethylmycophenolate + S-adenosyl-L-methionine = mycophenolate + S-adenosyl-L-homocysteine + H(+). It functions in the pathway secondary metabolite biosynthesis; terpenoid biosynthesis. O-methyltransferase; part of the gene cluster that mediates the biosynthesis of mycophenolic acid (MPA), the first isolated antibiotic natural product in the world obtained from a culture of Penicillium brevicompactum in 1893. MpaG' catalyzes the 5-O-methylation of three precursors in MPA biosynthesis including demethylmycophenolic acid (DMMPA), 4-farnesyl-3,5-dihydroxy-6-methylphthalide (FDHMP), and an intermediate containing three fewer carbon atoms compared to FDHMP (FDHMP-3C) with different catalytic efficiencies. The first step of the pathway is the synthesis of 5-methylorsellinic acid (5MOA) by the cytosolic polyketide synthase mpaC. 5MOA is then converted to the phthalide compound 5,7-dihydroxy-4,6-dimethylphthalide (DHMP) by the endoplasmic reticulum-bound cytochrome P450 monooxygenase mpaDE. MpaDE first catalyzes hydroxylation of 5-MOA to 4,6-dihydroxy-2-(hydroxymethyl)-3-methylbenzoic acid (DHMB). MpaDE then acts as a lactone synthase that catalyzes the ring closure to convert DHMB into DHMP. The next step is the prenylation of DHMP by the Golgi apparatus-associated prenyltransferase mpaA to yield farnesyl-DHMP (FDHMP). The ER-bound oxygenase mpaB then mediates the oxidative cleavage the C19-C20 double bond in FDHMP to yield FDHMP-3C via a mycophenolic aldehyde intermediate. The O-methyltransferase mpaG catalyzes the methylation of FDHMP-3C to yield MFDHMP-3C. MpaG and mpaB can also switch the order in which they act and, in this case, the conversion of FDHMP to MFDHMP-3C can take place via 5-O-methyl-FDHMP (MFDHMP). After the cytosolic methylation of FDHMP-3C, MFDHMP-3C enters into peroxisomes probably via free diffusion due to its low molecular weight. Upon a peroxisomal CoA ligation reaction, catalyzed by a beta-oxidation component enzyme acyl-CoA ligase ACL891, MFDHMP-3C-CoA would then be restricted to peroxisomes for the following beta-oxidation pathway steps. The peroxisomal beta-oxidation machinery than converts MFDHMP-3C-CoA into MPA_CoA, via a beta-oxidation chain-shortening process. Finally mpaH acts as a peroxisomal acyl-CoA hydrolase with high substrate specificity toward MPA-CoA to release the final product MPA. MpaH can also hydrolyze DMMPA-CoA to release demethylmycophenolic acid (DMMPA) that is further converted to MPA by mpaG. The sequence is that of O-methyltransferase mpaG' from Penicillium brevicompactum.